The following is a 290-amino-acid chain: Poly-beta-1,6-N-acetyl-D-glucosamine N-deacetylase (290 aa).

Positions 1–28 (MKYRKLIILVLSILIILPVSTLDGHHIA) are cleaved as a signal peptide. Residues 114–290 (RSVWINFDDM…KRWDGFHEKD (177 aa)) enclose the NodB homology domain.

Belongs to the polysaccharide deacetylase family.

The protein localises to the secreted. It is found in the cell wall. Its function is as follows. Catalyzes the N-deacetylation of poly-beta-1,6-N-acetyl-D-glucosamine (PNAG, also referred to as PIA), a biofilm adhesin polysaccharide. N-deacetylation is crucial for attachment of the polysaccharide to the bacterial cell surface; it leads to the introduction of positive charges in the otherwise neutral PIA polymer, allowing electrostatic interactions. The chain is Poly-beta-1,6-N-acetyl-D-glucosamine N-deacetylase (icaB) from Staphylococcus aureus (strain Mu50 / ATCC 700699).